The chain runs to 903 residues: KAT8 regulatory NSL complex subunit 1-like protein (903 aa).

Disordered stretches follow at residues 319 to 343 (DSDATGSSSDEDWDEKARQNSDECN), 419 to 441 (MPKSPQGTNPSPTNDLDMSPSSP), and 652 to 676 (TECTSSYSPDPQTPAHSWERRHRSE). Polar residues-rich tracts occupy residues 423-441 (PQGTNPSPTNDLDMSPSSP) and 652-661 (TECTSSYSPD). Residues 748-862 (EIITPSWKEV…ESPKGKTIHW (115 aa)) form the PEHE domain.

The polypeptide is KAT8 regulatory NSL complex subunit 1-like protein (kansl1l) (Xenopus tropicalis (Western clawed frog)).